A 229-amino-acid polypeptide reads, in one-letter code: Putative germin-like protein 3-4 (229 aa).

Positions 1–31 (MEHSFKTITAGVVFVVLLLQQAPVLIRATDA) are cleaved as a signal peptide. An intrachain disulfide couples Cys38 to Cys53. Positions 67 to 219 (SKIATGGDVN…ALRVDTGVVE (153 aa)) constitute a Cupin type-1 domain. N-linked (GlcNAc...) asparagine glycans are attached at residues Asn80 and Asn83. Residues His116, His118, Glu123, and His165 each contribute to the Mn(2+) site.

It belongs to the germin family. Oligomer (believed to be a pentamer but probably hexamer).

The protein localises to the secreted. It is found in the extracellular space. Its subcellular location is the apoplast. Functionally, may play a role in plant defense. Probably has no oxalate oxidase activity even if the active site is conserved. The chain is Putative germin-like protein 3-4 from Oryza sativa subsp. japonica (Rice).